A 397-amino-acid chain; its full sequence is MRESAHTNTSLWSKGMMAVTSAQFLSAFGDNALLFATLALLKAEFYPDWSQPILQMVFVGAYILFAPFVGQVADSFPKGRVMMFANSLKLLGAASICFGFNPFIGYTLVGIGAAAYSPAKYGILGELTTGDKLVKANGLMESSTIAAILLGSVAGGVLADWHVLAALGICAVVYAGAVVANLFIPTLPVARPGQSWRFTPMTSSFFNACRVLWRDGETRFSLIGTSMFWGAGVTLRFLLVLWVPTALGITDNATPTYLNAMVAVGIVVGAGAAAKLVTLETVRRCMPAGILIGVGVLFFSLQHALLPAYGLLILIGILGGFFIVPLNALLQERGKHTVGAGNAIAVQNLGENTAMLLMLGLYSLAVKAGLPVVGIGVGFGALFALAITGLWIWQRRR.

A run of 11 helical transmembrane segments spans residues 21–41, 53–73, 91–111, 139–159, 164–184, 229–249, 257–277, 281–301, 304–324, 344–364, and 372–392; these read SAQF…LALL, ILQM…GQVA, LGAA…LVGI, LMES…GVLA, LAAL…NLFI, WGAG…ALGI, YLNA…AKLV, TVRR…FFSL, ALLP…FFIV, IAVQ…LYSL, and VVGI…GLWI.

It belongs to the major facilitator superfamily. LplT (TC 2.A.1.42) family.

Its subcellular location is the cell inner membrane. Functionally, catalyzes the facilitated diffusion of 2-acyl-glycero-3-phosphoethanolamine (2-acyl-GPE) into the cell. This is Lysophospholipid transporter LplT from Enterobacter sp. (strain 638).